Consider the following 146-residue polypeptide: Large ribosomal subunit protein uL11 (146 aa).

This sequence belongs to the universal ribosomal protein uL11 family. As to quaternary structure, part of the ribosomal stalk of the 50S ribosomal subunit. Interacts with L10 and the large rRNA to form the base of the stalk. L10 forms an elongated spine to which L12 dimers bind in a sequential fashion forming a multimeric L10(L12)X complex. In terms of processing, one or more lysine residues are methylated.

In terms of biological role, forms part of the ribosomal stalk which helps the ribosome interact with GTP-bound translation factors. In Buchnera aphidicola subsp. Baizongia pistaciae (strain Bp), this protein is Large ribosomal subunit protein uL11.